The primary structure comprises 285 residues: MSELTEAEKRRLLRERRQKKFSNGGASSRLNKITGQASSHLNAESPLDAPSAAKATPPASVHSATPDIKEDSNVAPQLDLLKQLAAMQGQGTGKSTPQDSSTPDLLSLLSSMNTGMPSAEGTPSFGQAAPAAPINQAALDYHDYLLNRLKAWTILVKWVFFLLPYLYLITRPNSSVWPAYAFTQSAWFAPLRNPSNFTRIFATFEFLSISIYYQLLKNVEHKSKIKNLQDTNKLVKLVSLVPEGVIPVANLKGKLITLLQYWDLLSMLITDISFVLIVLGLLTYL.

A compositionally biased stretch (basic and acidic residues) spans 1-10; that stretch reads MSELTEAEKR. The tract at residues 1–71 is disordered; sequence MSELTEAEKR…HSATPDIKED (71 aa). N-acetylserine is present on S2. At 2 to 148 the chain is on the cytoplasmic side; it reads SELTEAEKRR…LDYHDYLLNR (147 aa). Over residues 11-20 the composition is skewed to basic residues; that stretch reads RLLRERRQKK. The segment covering 24 to 42 has biased composition (polar residues); sequence GGASSRLNKITGQASSHLN. Position 45 is a phosphoserine (S45). Over residues 49–60 the composition is skewed to low complexity; it reads APSAAKATPPAS. Residues 149–169 traverse the membrane as a helical segment; the sequence is LKAWTILVKWVFFLLPYLYLI. At 170–196 the chain is on the lumenal side; it reads TRPNSSVWPAYAFTQSAWFAPLRNPSN. N-linked (GlcNAc...) asparagine glycans are attached at residues N173 and N196. A helical transmembrane segment spans residues 197–216; it reads FTRIFATFEFLSISIYYQLL. Over 217-263 the chain is Cytoplasmic; sequence KNVEHKSKIKNLQDTNKLVKLVSLVPEGVIPVANLKGKLITLLQYWD. Residues 264-284 traverse the membrane as a helical segment; sequence LLSMLITDISFVLIVLGLLTY. Position 285 (L285) is a topological domain, lumenal.

It belongs to the GET2 family. In terms of assembly, component of the Golgi to ER traffic (GET) complex, which is composed of GET1, GET2 and GET3. Within the complex, GET1 and GET2 form a heterotetramer which is stabilized by phosphatidylinositol binding and which binds to the GET3 homodimer.

Its subcellular location is the endoplasmic reticulum membrane. It is found in the golgi apparatus membrane. In terms of biological role, required for the post-translational delivery of tail-anchored (TA) proteins to the endoplasmic reticulum. Together with GET1, acts as a membrane receptor for soluble GET3, which recognizes and selectively binds the transmembrane domain of TA proteins in the cytosol. The GET complex cooperates with the HDEL receptor ERD2 to mediate the ATP-dependent retrieval of resident ER proteins that contain a C-terminal H-D-E-L retention signal from the Golgi to the ER. Involved in DNA replication and DNA damage response and also in cell wall function. The protein is Golgi to ER traffic protein 2 of Saccharomyces cerevisiae (strain YJM789) (Baker's yeast).